The chain runs to 132 residues: MGFDVAGYLQSYSLKDWIRIIVYVGGYMLIRPYLMKLGAKIQEREHRKSLLEGEVDGTLDPEMTHGTKPKEHGEFDTDDEEEEENPDAEFRWGYSARRRIRKQREEYFKNQDKSPLDAYADDDEDIEEHLED.

A helical transmembrane segment spans residues 17–34 (WIRIIVYVGGYMLIRPYL). Disordered regions lie at residues 50–90 (LLEG…DAEF) and 106–132 (EYFK…HLED). The segment covering 62–75 (EMTHGTKPKEHGEF) has biased composition (basic and acidic residues). Residues 76–87 (DTDDEEEEENPD) are compositionally biased toward acidic residues. A Phosphothreonine modification is found at threonine 77. A compositionally biased stretch (basic and acidic residues) spans 106 to 115 (EYFKNQDKSP). Positions 119-132 (YADDDEDIEEHLED) are enriched in acidic residues.

This sequence belongs to the PGA2 family.

The protein localises to the endoplasmic reticulum membrane. It is found in the nucleus membrane. Functionally, involved processing and trafficking glycosylated proteins. This is PGA2-homolog C27.01c from Schizosaccharomyces pombe (strain 972 / ATCC 24843) (Fission yeast).